Reading from the N-terminus, the 528-residue chain is Galactokinase (528 aa).

Alpha-D-galactose is bound by residues Arg53, Glu59, His60, and Asp62. The ATP site is built by Gly165, Gly167, Ser169, and Ser170. Alpha-D-galactose is bound by residues Asn213 and Asp217. Asp217 serves as the catalytic Proton acceptor. The ATP site is built by Ser264, Asn265, and Lys266. Tyr274 lines the alpha-D-galactose pocket. Position 381 is a phosphoserine (Ser381).

The protein belongs to the GHMP kinase family. GalK subfamily.

The catalysed reaction is alpha-D-galactose + ATP = alpha-D-galactose 1-phosphate + ADP + H(+). It participates in carbohydrate metabolism; galactose metabolism. Functionally, galactokinase is a key enzyme in the galactose metabolism where it catalyzes the conversion of alpha-D-galactose to galactose 1-phosphate. Can also induce the transcription of the yeast GAL genes in response to the organism being challenged with galactose as the sole source of carbon. It's striking amino acid sequence similarity to GAL3 might explain its GAL3-like induction activity. The polypeptide is Galactokinase (Saccharomyces cerevisiae (strain ATCC 204508 / S288c) (Baker's yeast)).